Consider the following 231-residue polypeptide: Ribonuclease 3 (231 aa).

The RNase III domain occupies 3-130 (MHEFFENFGI…VTAAIYLDQT (128 aa)). A Mg(2+)-binding site is contributed by Glu43. Residue Asp47 is part of the active site. Asp116 and Glu119 together coordinate Mg(2+). The active site involves Glu119. The DRBM domain occupies 157 to 228 (DYKSELQEII…AKDCLNKLKK (72 aa)).

It belongs to the ribonuclease III family. In terms of assembly, homodimer. The cofactor is Mg(2+).

The protein localises to the cytoplasm. The catalysed reaction is Endonucleolytic cleavage to 5'-phosphomonoester.. Digests double-stranded RNA. Involved in the processing of primary rRNA transcript to yield the immediate precursors to the large and small rRNAs (23S and 16S). Processes some mRNAs, and tRNAs when they are encoded in the rRNA operon. Processes pre-crRNA and tracrRNA of type II CRISPR loci if present in the organism. This chain is Ribonuclease 3, found in Mesoplasma florum (strain ATCC 33453 / NBRC 100688 / NCTC 11704 / L1) (Acholeplasma florum).